Reading from the N-terminus, the 524-residue chain is Solute carrier family 35 member F5 (524 aa).

The next 2 helical transmembrane spans lie at 69 to 89 (MALG…SSEL) and 101 to 121 (FFST…FIIW). Phosphoserine is present on S207. A run of 8 helical transmembrane segments spans residues 244–264 (ISFF…EALS), 269–289 (AIVN…AAVF), 297–317 (FTLS…LVNL), 328–348 (TIGS…IVMI), 362–382 (MFFG…FFLL), 396–416 (VVLL…EFLW), 421–441 (FLTS…LSII), and 453–473 (WLFF…TLLC). An EamA domain is found at 253–317 (FLANLSYQEA…SIGGVVLVNL (65 aa)).

It belongs to the SLC35F solute transporter family.

The protein localises to the membrane. Putative solute transporter. The polypeptide is Solute carrier family 35 member F5 (Slc35f5) (Mus musculus (Mouse)).